Here is a 370-residue protein sequence, read N- to C-terminus: Aspartate-semialdehyde dehydrogenase 1 (370 aa).

NADP(+) is bound by residues 9-12, 36-37, and Gln72; these read RGMV and TS. Arg101 lines the phosphate pocket. Cys134 acts as the Acyl-thioester intermediate in catalysis. Cys134 carries the S-cysteinyl cysteine; in inhibited form modification. Gln161 provides a ligand contact to substrate. NADP(+) contacts are provided by residues 164 to 165 and Pro192; that span reads SG. Substrate is bound at residue Glu240. A phosphate-binding site is contributed by Lys243. Arg267 is a binding site for substrate. The active-site Proton acceptor is the His274. Gln350 contributes to the NADP(+) binding site.

Belongs to the aspartate-semialdehyde dehydrogenase family. In terms of assembly, homodimer.

It carries out the reaction L-aspartate 4-semialdehyde + phosphate + NADP(+) = 4-phospho-L-aspartate + NADPH + H(+). It functions in the pathway amino-acid biosynthesis; L-lysine biosynthesis via DAP pathway; (S)-tetrahydrodipicolinate from L-aspartate: step 2/4. It participates in amino-acid biosynthesis; L-methionine biosynthesis via de novo pathway; L-homoserine from L-aspartate: step 2/3. The protein operates within amino-acid biosynthesis; L-threonine biosynthesis; L-threonine from L-aspartate: step 2/5. Its activity is regulated as follows. Inhibited by S-methyl-L-cysteine sulfoxide in vitro, via the formation of a covalently bound cysteine at the active site Cys-134. In terms of biological role, catalyzes the NADPH-dependent formation of L-aspartate-semialdehyde (L-ASA) by the reductive dephosphorylation of L-aspartyl-4-phosphate. The chain is Aspartate-semialdehyde dehydrogenase 1 (asd1) from Vibrio cholerae serotype O1 (strain ATCC 39315 / El Tor Inaba N16961).